The following is a 158-amino-acid chain: Small ribosomal subunit protein uS9 (158 aa).

The protein belongs to the universal ribosomal protein uS9 family.

In Nitrobacter hamburgensis (strain DSM 10229 / NCIMB 13809 / X14), this protein is Small ribosomal subunit protein uS9.